The following is a 380-amino-acid chain: Ankyrin repeat domain-containing protein 63 (380 aa).

ANK repeat units follow at residues 11 to 40 (AGTR…RSII), 46 to 79 (QGRT…AVNL), 83 to 112 (RGRT…DPEA), 116 to 145 (AGNS…RLGL), and 153 to 182 (AGLT…RAAA). 2 stretches are compositionally biased toward low complexity: residues 181 to 203 (AAAA…PAAS) and 216 to 226 (RPLLARFARAA). Residues 181-256 (AAAAAARGSN…GSERPELGRS (76 aa)) form a disordered region. Ser-193 is modified (phosphoserine). Ser-294 carries the post-translational modification Phosphoserine. A disordered region spans residues 309–368 (PIGLSPHPEGGPGSGRLGLRRRSTAPDIPSLVGEAPGPESGPELEANALSVSVPGPNPWQ).

The sequence is that of Ankyrin repeat domain-containing protein 63 from Homo sapiens (Human).